We begin with the raw amino-acid sequence, 43 residues long: Protein PsbN (43 aa).

Residues 3–23 (IATLVAIFISGLLVSFTGYAL) traverse the membrane as a helical segment.

It belongs to the PsbN family.

It is found in the plastid. It localises to the chloroplast thylakoid membrane. Functionally, may play a role in photosystem I and II biogenesis. The polypeptide is Protein PsbN (Euonymus alatus (Burning bush)).